We begin with the raw amino-acid sequence, 304 residues long: DDRGK domain-containing protein 1 (304 aa).

Topologically, residues 1-2 (MD) are lumenal. A helical transmembrane segment spans residues 3–23 (LIILVGIAIALLVVIISLYLL). Topologically, residues 24-304 (QKKNSTTEAK…LTPVSAEGSS (281 aa)) are cytoplasmic. Residues 31-174 (EAKPAAAAPQ…AERLAKEERE (144 aa)) are disordered. Positions 53 to 82 (RRAQIARNQRNRLRQNAPVAAAAPQAEAPA) are enriched in low complexity. A compositionally biased stretch (basic and acidic residues) spans 105 to 174 (LDEKMGAKKR…AERLAKEERE (70 aa)).

The protein belongs to the DDRGK1 family. As to quaternary structure, interacts with Atg9; the interaction is transient.

The protein resides in the endoplasmic reticulum membrane. Functionally, substrate adapter for ufmylation, the covalent attachment of the ubiquitin-like modifier UFM1 to substrate proteins. Required for ufmylation of Atg9; protects the nervous system during aging, possibly by stabilizing Atg9 and supporting its function. The protein is DDRGK domain-containing protein 1 of Drosophila ananassae (Fruit fly).